Consider the following 274-residue polypeptide: Dermonecrotic toxin SdSicTox-betaIIB1biv (274 aa).

His5 is a catalytic residue. Mg(2+) is bound by residues Glu25 and Asp27. His41 serves as the catalytic Nucleophile. 2 cysteine pairs are disulfide-bonded: Cys45–Cys51 and Cys47–Cys190. Position 85 (Asp85) interacts with Mg(2+).

Belongs to the arthropod phospholipase D family. Class II subfamily. Mg(2+) is required as a cofactor. In terms of tissue distribution, expressed by the venom gland.

It localises to the secreted. It carries out the reaction an N-(acyl)-sphingosylphosphocholine = an N-(acyl)-sphingosyl-1,3-cyclic phosphate + choline. The catalysed reaction is an N-(acyl)-sphingosylphosphoethanolamine = an N-(acyl)-sphingosyl-1,3-cyclic phosphate + ethanolamine. It catalyses the reaction a 1-acyl-sn-glycero-3-phosphocholine = a 1-acyl-sn-glycero-2,3-cyclic phosphate + choline. The enzyme catalyses a 1-acyl-sn-glycero-3-phosphoethanolamine = a 1-acyl-sn-glycero-2,3-cyclic phosphate + ethanolamine. Its function is as follows. Dermonecrotic toxins cleave the phosphodiester linkage between the phosphate and headgroup of certain phospholipids (sphingolipid and lysolipid substrates), forming an alcohol (often choline) and a cyclic phosphate. This toxin acts on sphingomyelin (SM). It may also act on ceramide phosphoethanolamine (CPE), lysophosphatidylcholine (LPC) and lysophosphatidylethanolamine (LPE), but not on lysophosphatidylserine (LPS), and lysophosphatidylglycerol (LPG). It acts by transphosphatidylation, releasing exclusively cyclic phosphate products as second products. Induces dermonecrosis, hemolysis, increased vascular permeability, edema, inflammatory response, and platelet aggregation. The polypeptide is Dermonecrotic toxin SdSicTox-betaIIB1biv (Sicarius cf. damarensis (strain GJB-2008) (Six-eyed sand spider)).